We begin with the raw amino-acid sequence, 187 residues long: Ribonuclease M5 (187 aa).

The 84-residue stretch at 5-88 (KEVIVVEGKD…AFLPRKAGVP (84 aa)) folds into the Toprim domain. Mg(2+) contacts are provided by glutamate 11, aspartate 57, and aspartate 59.

It belongs to the ribonuclease M5 family. The cofactor is Mg(2+).

The protein resides in the cytoplasm. The catalysed reaction is Endonucleolytic cleavage of RNA, removing 21 and 42 nucleotides, respectively, from the 5'- and 3'-termini of a 5S-rRNA precursor.. In terms of biological role, required for correct processing of both the 5' and 3' ends of 5S rRNA precursor. Cleaves both sides of a double-stranded region yielding mature 5S rRNA in one step. The polypeptide is Ribonuclease M5 (Lactiplantibacillus plantarum (strain ATCC BAA-793 / NCIMB 8826 / WCFS1) (Lactobacillus plantarum)).